The primary structure comprises 129 residues: Small ribosomal subunit protein uS11 (129 aa).

It belongs to the universal ribosomal protein uS11 family. Part of the 30S ribosomal subunit. Interacts with proteins S7 and S18. Binds to IF-3.

In terms of biological role, located on the platform of the 30S subunit, it bridges several disparate RNA helices of the 16S rRNA. Forms part of the Shine-Dalgarno cleft in the 70S ribosome. The protein is Small ribosomal subunit protein uS11 of Francisella tularensis subsp. tularensis (strain FSC 198).